The sequence spans 2365 residues: TRIO and F-actin-binding protein (2365 aa).

Disordered regions lie at residues 48-1106 (VPYC…HEPL), 1168-1554 (HRDA…SERR), 1593-1667 (LPRK…WPKI), and 1679-1751 (AGLE…TSWR). Positions 132–151 (SDPTSSPDSATPDDTSNSSS) are enriched in low complexity. H221 carries the post-translational modification Phosphothreonine. 13 stretches are compositionally biased toward polar residues: residues 239-271 (TLTQ…QAAS), 291-375 (RASS…TPQR), 403-422 (RTSC…SPNR), 429-471 (RTSC…SPNR), 478-520 (RTSC…SPNR), 527-569 (RTSC…SPNR), 576-618 (RTSC…SPNR), 625-650 (RTSC…SPRT), 661-674 (SSPN…NPRT), 683-701 (RASS…TSCA), 709-722 (SSPN…NPRT), 745-785 (RTSC…SPNR), and 807-837 (IRAT…PKTS). The essentiel for its aggregation stretch occupies residues 324 to 348 (STQEDTPRASSTQWNTPRASSPSRS). At Q457 the chain carries Phosphothreonine. Positions 839–854 (TKRDNLRPTCTQRDRT) are enriched in basic and acidic residues. 3 stretches are compositionally biased toward polar residues: residues 855–898 (QSFS…SSPH), 913–927 (PTQS…PSRS), and 945–994 (DRPQ…TSSP). Over residues 1045–1056 (RAPESEPPHHEP) the composition is skewed to basic and acidic residues. Residues 1195-1206 (SMESLAPSTDSL) are compositionally biased toward polar residues. Composition is skewed to basic and acidic residues over residues 1260 to 1270 (ETRHNLEREEY) and 1303 to 1319 (GRAE…RKSE). Residues 1332-1349 (SQQPSQGQSQLLRRQSSP) show a composition bias toward low complexity. Basic and acidic residues-rich tracts occupy residues 1378–1387 (SPEKRPEGDR) and 1402–1411 (TPERELRTQR). A compositionally biased stretch (gly residues) spans 1452–1461 (GGLGPGGWWG). The span at 1494–1508 (WEEKPTHELPRELGK) shows a compositional bias: basic and acidic residues. The span at 1524–1534 (ESSQSWHSGTP) shows a compositional bias: polar residues. Positions 1594–1606 (PRKDPAGHRDDLA) are enriched in basic and acidic residues. Polar residues predominate over residues 1645–1664 (ALQSQSPVQLPSPACTSTQW). Positions 1696 to 1705 (PSLPELQFQP) are enriched in low complexity. Residues 1724–1735 (KQADSADKRPAE) show a composition bias toward basic and acidic residues. One can recognise a PH domain in the interval 1778–1887 (LNFKKGWMSI…WIEALRKTVR (110 aa)). A Phosphoserine modification is found at S1796. Disordered stretches follow at residues 1889–2017 (TSAP…LTED) and 2174–2194 (LSKT…HQSD). Residue R1930 is modified to Omega-N-methylarginine. S1949 and S1955 each carry phosphoserine. Over residues 1965 to 1997 (TPDRLAKQEELERDLAQRSEERRKWFEATDSRT) the composition is skewed to basic and acidic residues. Coiled coils occupy residues 2062–2247 (SDGH…NQEL) and 2281–2361 (ELEV…SMRN).

As to quaternary structure, isoform 1 forms aggregates. Isoform 1 binds to TRIO and F-actin. Isoform 1 may also interact with myosin II. Interacts with HECTD3. Interacts with PJVK. Interacts with TERF1; mediates TERF1 localization to the centrosome. Post-translationally, ubiquitinated by HECTD3, leading to its degradation by the proteasome. In terms of processing, phosphorylation at Thr-457 by PLK1 ensures mitotic progression and is essential for accurate chromosome segregation. Phosphorylation at residues Thr-221 and Thr-457 by kinase NEK2A and PLK1 coordinates TERF1 translocation from telomere to spindle pole. Widely expressed. Highly expressed in heart and placenta. As to expression, expressed in fetal brain, retina and cochlea but is not detectable in the other tissues.

It localises to the nucleus. The protein localises to the cytoplasm. Its subcellular location is the cytoskeleton. It is found in the microtubule organizing center. The protein resides in the centrosome. It localises to the midbody. The protein localises to the chromosome. Its subcellular location is the telomere. Functionally, regulates actin cytoskeletal organization, cell spreading and cell contraction by directly binding and stabilizing filamentous F-actin and prevents its depolymerization. May also serve as a linker protein to recruit proteins required for F-actin formation and turnover. Essential for correct mitotic progression. Its function is as follows. Plays a pivotal role in the formation of stereocilia rootlets. This is TRIO and F-actin-binding protein (TRIOBP) from Homo sapiens (Human).